The primary structure comprises 494 residues: 4-trimethylaminobutyraldehyde dehydrogenase (494 aa).

Ser-2 carries the post-translational modification N-acetylserine; in 4-trimethylaminobutyraldehyde dehydrogenase, N-terminally processed. Position 30 is an N6-acetyllysine; alternate (Lys-30). Lys-30 carries the post-translational modification N6-succinyllysine; alternate. N6-succinyllysine is present on Lys-59. NAD(+) is bound by residues Lys-180 and 232 to 236 (GSVPT). Glu-254 (proton acceptor) is an active-site residue. Cys-288 serves as the catalytic Nucleophile. Lys-298 is modified (N6-acetyllysine). Position 303 is an N6-acetyllysine; alternate (Lys-303). Lys-303 carries the N6-succinyllysine; alternate modification. The residue at position 344 (Lys-344) is an N6-acetyllysine. Glu-391 is a binding site for NAD(+).

This sequence belongs to the aldehyde dehydrogenase family. Homotetramer. As to expression, detected in brain (at protein level). High expression in adult liver, skeletal muscle, and kidney. Low levels in heart, pancreas, lung and brain. Expressed in all regions of the brain. Expression levels are variable in the different brain areas, with the highest levels in the spinal cord and the lowest in the occipital pole.

Its subcellular location is the cytoplasm. It localises to the cytosol. The enzyme catalyses 4-(trimethylamino)butanal + NAD(+) + H2O = 4-(trimethylamino)butanoate + NADH + 2 H(+). It carries out the reaction an aldehyde + NAD(+) + H2O = a carboxylate + NADH + 2 H(+). The catalysed reaction is 4-aminobutanal + NAD(+) + H2O = 4-aminobutanoate + NADH + 2 H(+). It catalyses the reaction formaldehyde + NAD(+) + H2O = formate + NADH + 2 H(+). The enzyme catalyses acetaldehyde + NAD(+) + H2O = acetate + NADH + 2 H(+). It carries out the reaction imidazole-4-acetaldehyde + NAD(+) + H2O = imidazole-4-acetate + NADH + 2 H(+). The catalysed reaction is acrolein + NAD(+) + H2O = acrylate + NADH + 2 H(+). It catalyses the reaction (5-hydroxyindol-3-yl)acetaldehyde + NAD(+) + H2O = (5-hydroxyindol-3-yl)acetate + NADH + 2 H(+). The enzyme catalyses 3,4-dihydroxyphenylacetaldehyde + NAD(+) + H2O = 3,4-dihydroxyphenylacetate + NADH + 2 H(+). It carries out the reaction spermine monoaldehyde + NAD(+) + H2O = N-(2-carboxyethyl)spermidine + NADH + 2 H(+). The catalysed reaction is propanal + NAD(+) + H2O = propanoate + NADH + 2 H(+). It catalyses the reaction butanal + NAD(+) + H2O = butanoate + NADH + 2 H(+). The enzyme catalyses pentanal + NAD(+) + H2O = pentanoate + NADH + 2 H(+). It carries out the reaction hexanal + NAD(+) + H2O = hexanoate + NADH + 2 H(+). It participates in amine and polyamine biosynthesis; carnitine biosynthesis. Its function is as follows. Converts gamma-trimethylaminobutyraldehyde into gamma-butyrobetaine with high efficiency (in vitro). Can catalyze the irreversible oxidation of a broad range of aldehydes to the corresponding acids in an NAD-dependent reaction, but with low efficiency. Catalyzes the oxidation of aldehydes arising from biogenic amines and polyamines. In Homo sapiens (Human), this protein is 4-trimethylaminobutyraldehyde dehydrogenase (ALDH9A1).